The following is a 964-amino-acid chain: Protein translocase subunit SecA (964 aa).

Residues Gln86, 104 to 108, and Asp494 contribute to the ATP site; that span reads GEGKT. A disordered region spans residues 848-964; the sequence is AESADTIAVA…YKMCHGQNEK (117 aa). Acidic residues predominate over residues 871–882; that stretch reads AEGEVEEEDEDT. The segment covering 889–900 has biased composition (low complexity); the sequence is AESAAASGAGES. Zn(2+) contacts are provided by Cys947, Cys949, Cys958, and His959.

This sequence belongs to the SecA family. As to quaternary structure, monomer and homodimer. Part of the essential Sec protein translocation apparatus which comprises SecA, SecYEG and auxiliary proteins SecDF. Other proteins may also be involved. It depends on Zn(2+) as a cofactor.

The protein localises to the cell membrane. The protein resides in the cytoplasm. It catalyses the reaction ATP + H2O + cellular proteinSide 1 = ADP + phosphate + cellular proteinSide 2.. Its function is as follows. Part of the Sec protein translocase complex. Interacts with the SecYEG preprotein conducting channel. Has a central role in coupling the hydrolysis of ATP to the transfer of proteins into and across the cell membrane, serving as an ATP-driven molecular motor driving the stepwise translocation of polypeptide chains across the membrane. This chain is Protein translocase subunit SecA, found in Bifidobacterium longum (strain DJO10A).